Reading from the N-terminus, the 86-residue chain is Colicin-E2 immunity protein (86 aa).

It belongs to the colicins ColE2/ColE8/ColE9 and pyocins S1/S2 family.

In terms of biological role, this protein is able to protect a cell, which harbors the plasmid ColE2 encoding colicin E2, against colicin E2. This Escherichia coli protein is Colicin-E2 immunity protein (imm).